The chain runs to 103 residues: Large ribosomal subunit protein uL23 (103 aa).

The protein belongs to the universal ribosomal protein uL23 family. Part of the 50S ribosomal subunit. Contacts protein L29, and trigger factor when it is bound to the ribosome.

Its function is as follows. One of the early assembly proteins it binds 23S rRNA. One of the proteins that surrounds the polypeptide exit tunnel on the outside of the ribosome. Forms the main docking site for trigger factor binding to the ribosome. This Prochlorococcus marinus (strain NATL1A) protein is Large ribosomal subunit protein uL23.